The sequence spans 483 residues: MLTLDTLNVMLAVSEEGLIEEMIIALLASPQLAVFFEKFPRLKAAITDDVPRWREALRSRLKDARVPPELTEEVMCYQQSQLLSTPQFIVQLPQILDLLHRLNSPWAEQARQLVDANSTITSALHTLFLQRWRLSLIVQATTLNQQLLEEEREQLLSEVQERMTLSGQLEPILADNNTAAGRLWDMSAGQLKRSDYQLIVKYGEFLNEQPELKRLAEQLGRSREAKSIPRNDAQMETFRTMVREPATVPEQVDGLQQSDDILRLLPPELATLGITELEYEFYRRLVEKQLLTYRLHGESWREKMIERPVVHKDYDEQPRGPFIVCVDTSGSMGGFNEQCAKAFCLALMRIALAENRRCYIMLFSTEIVRYELSGPQGIEQAIRFLSQQFRGGTDLASCFRAIMERLQSREWFDADAVVISDFIAQRLPDDVTSKVKELQRVHQHRFHAVAMSAHGKPGIMRIFDHIWRFDTGMRSRLLRRWRR.

The protein belongs to the ViaA family. In terms of assembly, homodimer. Interacts with RavA.

The protein resides in the cytoplasm. Component of the RavA-ViaA chaperone complex, which may act on the membrane to optimize the function of some of the respiratory chains. ViaA stimulates the ATPase activity of RavA. In Escherichia coli O81 (strain ED1a), this protein is Regulatory protein ViaA.